Consider the following 317-residue polypeptide: Melanocyte-stimulating hormone receptor (317 aa).

At 1 to 37 (MPVQGSQRRLLGSLNSTPTATPHLGLAANQTGARCLE) the chain is on the extracellular side. An N-linked (GlcNAc...) asparagine glycan is attached at N29. Residues 38–63 (VSIPDGLFLSLGLVSLVENVLVVTAI) traverse the membrane as a helical segment. Residues 64 to 72 (AKNRNLHSP) lie on the Cytoplasmic side of the membrane. The chain crosses the membrane as a helical span at residues 73 to 93 (MYCFICCLALSDLLVSGSNML). Residues 94-118 (ETAVTLLLEAGALAARAAVVQQLDN) are Extracellular-facing. Residues 119-140 (VIDVITCSSMLSSLCFLGAIAV) traverse the membrane as a helical segment. The Cytoplasmic portion of the chain corresponds to 141–163 (DRYISIFYALRYHSIVTLPRARR). A helical membrane pass occupies residues 164–183 (AVAAIWVASVLFSMLFIAYY). Residues 184–191 (DHAAVLLC) are Extracellular-facing. A helical transmembrane segment spans residues 192–211 (LVVFFLAMLVLMAVLYVHML). Over 212–240 (ARACQHAQGIARLHKRQRPAHQGFGLKGA) the chain is Cytoplasmic. A helical transmembrane segment spans residues 241 to 266 (ATLTILLGIFFLCWGPFFLHLTLIVL). Topologically, residues 267 to 279 (CPQHPTCSCIFKN) are extracellular. The chain crosses the membrane as a helical span at residues 280–300 (FNLFLALIICNAIIDPLIYAF). Over 301–317 (RSQELRRTLKEVLLCSW) the chain is Cytoplasmic. C315 carries S-palmitoyl cysteine lipidation.

It belongs to the G-protein coupled receptor 1 family. As to quaternary structure, interacts with MGRN1, but does not undergo MGRN1-mediated ubiquitination; this interaction competes with GNAS-binding and thus inhibits agonist-induced cAMP production. Interacts with OPN3; the interaction results in a decrease in MC1R-mediated cAMP signaling and ultimately a decrease in melanin production in melanocytes.

The protein localises to the cell membrane. In terms of biological role, receptor for MSH (alpha, beta and gamma) and ACTH. The activity of this receptor is mediated by G proteins which activate adenylate cyclase. Mediates melanogenesis, the production of eumelanin (black/brown) and phaeomelanin (red/yellow), via regulation of cAMP signaling in melanocytes. The polypeptide is Melanocyte-stimulating hormone receptor (MC1R) (Miopithecus talapoin (Angolan talapoin)).